A 238-amino-acid chain; its full sequence is Ubiquinone biosynthesis O-methyltransferase (238 aa).

Arg39, Gly59, Asp80, and Met124 together coordinate S-adenosyl-L-methionine.

This sequence belongs to the methyltransferase superfamily. UbiG/COQ3 family.

It carries out the reaction a 3-demethylubiquinol + S-adenosyl-L-methionine = a ubiquinol + S-adenosyl-L-homocysteine + H(+). It catalyses the reaction a 3-(all-trans-polyprenyl)benzene-1,2-diol + S-adenosyl-L-methionine = a 2-methoxy-6-(all-trans-polyprenyl)phenol + S-adenosyl-L-homocysteine + H(+). It participates in cofactor biosynthesis; ubiquinone biosynthesis. Functionally, O-methyltransferase that catalyzes the 2 O-methylation steps in the ubiquinone biosynthetic pathway. This Aeromonas salmonicida (strain A449) protein is Ubiquinone biosynthesis O-methyltransferase.